A 372-amino-acid chain; its full sequence is Anhydro-N-acetylmuramic acid kinase (372 aa).

12 to 19 contacts ATP; sequence GTSMDALD.

The protein belongs to the anhydro-N-acetylmuramic acid kinase family.

The catalysed reaction is 1,6-anhydro-N-acetyl-beta-muramate + ATP + H2O = N-acetyl-D-muramate 6-phosphate + ADP + H(+). It participates in amino-sugar metabolism; 1,6-anhydro-N-acetylmuramate degradation. It functions in the pathway cell wall biogenesis; peptidoglycan recycling. Catalyzes the specific phosphorylation of 1,6-anhydro-N-acetylmuramic acid (anhMurNAc) with the simultaneous cleavage of the 1,6-anhydro ring, generating MurNAc-6-P. Is required for the utilization of anhMurNAc either imported from the medium or derived from its own cell wall murein, and thus plays a role in cell wall recycling. The sequence is that of Anhydro-N-acetylmuramic acid kinase from Coxiella burnetii (strain CbuK_Q154) (Coxiella burnetii (strain Q154)).